The following is a 562-amino-acid chain: Glutamine--tRNA ligase (562 aa).

The 'HIGH' region motif lies at 35 to 45 (PEPNGYLHIGH). ATP contacts are provided by residues 36–38 (EPN) and 42–48 (HIGHAKS). Residues D68 and Y213 each contribute to the L-glutamine site. ATP-binding positions include T232, 262–263 (RL), and 270–272 (LSK). The short motif at 269 to 273 (ILSKR) is the 'KMSKS' region element.

Belongs to the class-I aminoacyl-tRNA synthetase family. Monomer.

The protein localises to the cytoplasm. It catalyses the reaction tRNA(Gln) + L-glutamine + ATP = L-glutaminyl-tRNA(Gln) + AMP + diphosphate. This Buchnera aphidicola subsp. Schizaphis graminum (strain Sg) protein is Glutamine--tRNA ligase.